We begin with the raw amino-acid sequence, 364 residues long: Peptide chain release factor 2 (364 aa).

Position 251 is an N5-methylglutamine (Gln-251).

The protein belongs to the prokaryotic/mitochondrial release factor family. In terms of processing, methylated by PrmC. Methylation increases the termination efficiency of RF2.

It localises to the cytoplasm. Its function is as follows. Peptide chain release factor 2 directs the termination of translation in response to the peptide chain termination codons UGA and UAA. The sequence is that of Peptide chain release factor 2 from Campylobacter hominis (strain ATCC BAA-381 / DSM 21671 / CCUG 45161 / LMG 19568 / NCTC 13146 / CH001A).